The sequence spans 123 residues: Small ribosomal subunit protein uS12 (123 aa).

Residues 1 to 32 (MPTIQQLVRKGRTDKISKNKTPALKGSPQRRG) form a disordered region. Residue D89 is modified to 3-methylthioaspartic acid. Residues 103 to 123 (DTQGVKGRKQARSRYGAKKEK) form a disordered region. Over residues 108–123 (KGRKQARSRYGAKKEK) the composition is skewed to basic residues.

This sequence belongs to the universal ribosomal protein uS12 family. In terms of assembly, part of the 30S ribosomal subunit. Contacts proteins S8 and S17. May interact with IF1 in the 30S initiation complex.

In terms of biological role, with S4 and S5 plays an important role in translational accuracy. Functionally, interacts with and stabilizes bases of the 16S rRNA that are involved in tRNA selection in the A site and with the mRNA backbone. Located at the interface of the 30S and 50S subunits, it traverses the body of the 30S subunit contacting proteins on the other side and probably holding the rRNA structure together. The combined cluster of proteins S8, S12 and S17 appears to hold together the shoulder and platform of the 30S subunit. The polypeptide is Small ribosomal subunit protein uS12 (Cutibacterium acnes (strain DSM 16379 / KPA171202) (Propionibacterium acnes)).